Consider the following 583-residue polypeptide: 2-succinyl-5-enolpyruvyl-6-hydroxy-3-cyclohexene-1-carboxylate synthase (583 aa).

The protein belongs to the TPP enzyme family. MenD subfamily. In terms of assembly, homodimer. Mg(2+) is required as a cofactor. The cofactor is Mn(2+). It depends on thiamine diphosphate as a cofactor.

It catalyses the reaction isochorismate + 2-oxoglutarate + H(+) = 5-enolpyruvoyl-6-hydroxy-2-succinyl-cyclohex-3-ene-1-carboxylate + CO2. It participates in quinol/quinone metabolism; 1,4-dihydroxy-2-naphthoate biosynthesis; 1,4-dihydroxy-2-naphthoate from chorismate: step 2/7. Its pathway is cofactor biosynthesis; phylloquinone biosynthesis. Catalyzes the thiamine diphosphate-dependent decarboxylation of 2-oxoglutarate and the subsequent addition of the resulting succinic semialdehyde-thiamine pyrophosphate anion to isochorismate to yield 2-succinyl-5-enolpyruvyl-6-hydroxy-3-cyclohexene-1-carboxylate (SEPHCHC). The chain is 2-succinyl-5-enolpyruvyl-6-hydroxy-3-cyclohexene-1-carboxylate synthase from Trichormus variabilis (strain ATCC 29413 / PCC 7937) (Anabaena variabilis).